Here is a 349-residue protein sequence, read N- to C-terminus: Green-sensitive opsin-2 (349 aa).

Residues 1–36 lie on the Extracellular side of the membrane; sequence MNGTEGNNFYVPLSNRTGLVRSPFEYPQYYLAEPWQ. N-linked (GlcNAc...) asparagine glycans are attached at residues asparagine 2 and asparagine 15. Residues 37–61 form a helical membrane-spanning segment; that stretch reads FKLLAVYMFFLICLGLPINGLTLIC. The Cytoplasmic segment spans residues 62 to 73; the sequence is TAQHKKLRQPLN. Residues 74–99 form a helical membrane-spanning segment; sequence FILVNLAVAGAIMVCFGFTVTFYTAI. Topologically, residues 100–113 are extracellular; the sequence is NGYFALGPTGCAVE. A disulfide bridge connects residues cysteine 110 and cysteine 187. The chain crosses the membrane as a helical span at residues 114–133; that stretch reads GFMATLGGEVALWSLVVLAI. The Cytoplasmic portion of the chain corresponds to 134–152; that stretch reads ERYIVVCKPMGSFKFSSTH. A helical membrane pass occupies residues 153-176; that stretch reads ASAGIAFTWVMAMACAAPPLVGWS. Over 177 to 202 the chain is Extracellular; it reads RYIPEGIQCSCGPDYYTLNPEYNNES. Residues 203–230 form a helical membrane-spanning segment; sequence YVLYMFICHFILPVTIIFFTYGRLVCTV. At 231-252 the chain is on the cytoplasmic side; it reads KAAAAQQQDSASTQKAEREVTK. A helical transmembrane segment spans residues 253–276; that stretch reads MVILMVLGFLVAWTPYATVAAWIF. Over 277–284 the chain is Extracellular; the sequence is FNKGAAFS. A helical membrane pass occupies residues 285-309; sequence AQFMAIPAFFSKTSALYNPVIYVLL. N6-(retinylidene)lysine is present on lysine 296. Residues 310 to 349 lie on the Cytoplasmic side of the membrane; the sequence is NKQFRSCMLTTLFCGKNPLGDEESSTVSTSKTEVSSVSPA. The disordered stretch occupies residues 329-349; it reads GDEESSTVSTSKTEVSSVSPA. Positions 334–349 are enriched in low complexity; that stretch reads STVSTSKTEVSSVSPA.

It belongs to the G-protein coupled receptor 1 family. Opsin subfamily. Post-translationally, phosphorylated on some or all of the serine and threonine residues present in the C-terminal region. The color pigments are found in the cone photoreceptor cells.

It localises to the membrane. Its function is as follows. Visual pigments are the light-absorbing molecules that mediate vision. They consist of an apoprotein, opsin, covalently linked to cis-retinal. The sequence is that of Green-sensitive opsin-2 from Carassius auratus (Goldfish).